We begin with the raw amino-acid sequence, 304 residues long: E3 ubiquitin-protein ligase RNF144B (304 aa).

The TRIAD supradomain stretch occupies residues 27–245; that stretch reads PLVTCKLCLC…YDRGPCRNKL (219 aa). Zn(2+) is bound by residues Cys-31, Cys-34, Cys-54, Cys-57, Cys-122, Cys-127, Cys-146, Cys-149, Cys-154, Cys-157, His-162, Cys-167, Cys-194, and Cys-197. The RING-type 1 zinc-finger motif lies at 31–81; sequence CKLCLCEQSLDKMTTLQECRCIFCTACLKQYMQLAIREGCGSPITCPDMVC. The IBR-type zinc-finger motif lies at 102–167; it reads QLYQRLKFER…KDAWHAEVSC (66 aa). The segment at 194-223 adopts an RING-type 2; atypical zinc-finger fold; the sequence is CPVCRVYIERNEGCAQMMCKNCKHTFCWYC. Cys-207 is a catalytic residue. Zn(2+) contacts are provided by Cys-212, Cys-215, Cys-220, Cys-223, His-235, and Cys-241. A helical transmembrane segment spans residues 259 to 279; the sequence is VVGILVGLGIIALVTSPLLLL.

The protein belongs to the RBR family. RNF144 subfamily. In terms of assembly, interacts with UBE2L3, UBE2L6 and LCMT2, as well as with BAX. Interacts with TBK1; this interaction inhibits TBK1 phosphorylation and 'Lys-63'-linked polyubiquitination. In terms of processing, auto-ubiquitinated.

It localises to the mitochondrion membrane. Its subcellular location is the cytoplasm. It carries out the reaction [E2 ubiquitin-conjugating enzyme]-S-ubiquitinyl-L-cysteine + [acceptor protein]-L-lysine = [E2 ubiquitin-conjugating enzyme]-L-cysteine + [acceptor protein]-N(6)-ubiquitinyl-L-lysine.. It participates in protein modification; protein ubiquitination. Functionally, E3 ubiquitin-protein ligase which accepts ubiquitin from E2 ubiquitin-conjugating enzymes UBE2L3 and UBE2L6 in the form of a thioester and then directly transfers the ubiquitin to targeted substrates such as LCMT2, thereby promoting their degradation. Induces apoptosis via a p53/TP53-dependent but caspase-independent mechanism. Plays a crucial role in maintaining the genomic stability by controlling the degradation of multiple proteins involved in mitotic progression and DNA damage. Regulates epithelial homeostasis by mediating degradation of CDKN1A and isoform 2 of TP63. Plays a regulatory role in innate immunity by negatively regulating IRF3 activation and IFN-beta production. Mechanistically, inhibits TBK1 phosphorylation and 'Lys-63'-linked polyubiquitination independently of its E3 ligase activity. Alternatively, promotes 'Lys-27' and 'Lys-33'-linked ubiquitination of IFIH1/MDA5, promoting selective autophagic degradation of IFIH1/MDA5 to inhibit antiviral response. The protein is E3 ubiquitin-protein ligase RNF144B (RNF144B) of Bos taurus (Bovine).